The primary structure comprises 736 residues: Fidgetin (736 aa).

Disordered stretches follow at residues 118–155 (GMTP…CGNH), 180–248 (TYSG…YSPG), 272–295 (IPGY…GSSA), and 341–438 (STRG…AEEQ). Over residues 128–150 (VTASVGSSTGVASSLSEPSYSSS) the composition is skewed to low complexity. Positions 205-214 (QPPPPPPPTL) are enriched in pro residues. Positions 216 to 232 (PSYNTSSPNLSSYNYPP) are enriched in low complexity. Residues 352-368 (DTSSLAFKPTKQSMPTD) show a composition bias toward polar residues. Residues Ala-467 and 507-512 (GTGRTL) contribute to the ATP site.

Belongs to the AAA ATPase family.

It is found in the nucleus matrix. It localises to the cytoplasm. Its subcellular location is the cytoskeleton. The protein localises to the microtubule organizing center. The protein resides in the centrosome. Its function is as follows. ATP-dependent microtubule severing protein. Severs microtubules along their length and depolymerizes their ends, primarily the minus-end, suppressing microtubule growth from and attachment to centrosomes. Microtubule severing may promote rapid reorganization of cellular microtubule arrays and the release of microtubules from the centrosome following nucleation. Microtubule release from the mitotic spindle poles may allow depolymerization of the microtubule end proximal to the spindle pole, leading to poleward microtubule flux and poleward motion of chromosome. The polypeptide is Fidgetin (fign) (Danio rerio (Zebrafish)).